Reading from the N-terminus, the 123-residue chain is Large ribosomal subunit protein uL14 (123 aa).

It belongs to the universal ribosomal protein uL14 family. In terms of assembly, part of the 50S ribosomal subunit. Forms a cluster with proteins L3 and L19. In the 70S ribosome, L14 and L19 interact and together make contacts with the 16S rRNA in bridges B5 and B8.

Binds to 23S rRNA. Forms part of two intersubunit bridges in the 70S ribosome. This Vibrio parahaemolyticus serotype O3:K6 (strain RIMD 2210633) protein is Large ribosomal subunit protein uL14.